Consider the following 141-residue polypeptide: Hemoglobin subunit alpha (141 aa).

One can recognise a Globin domain in the interval 1 to 141 (VLSAADKGHV…VSTVLTSKYR (141 aa)). Ser-3 carries the post-translational modification Phosphoserine. 2 positions are modified to N6-succinyllysine: Lys-7 and Lys-11. Lys-16 carries the N6-acetyllysine; alternate modification. At Lys-16 the chain carries N6-succinyllysine; alternate. Tyr-24 is subject to Phosphotyrosine. Ser-35 bears the Phosphoserine mark. Lys-40 carries the N6-succinyllysine modification. Ser-49 carries the post-translational modification Phosphoserine. His-58 is a binding site for O2. Position 87 (His-87) interacts with heme b. The residue at position 102 (Ser-102) is a Phosphoserine. Residue Thr-108 is modified to Phosphothreonine. At Ser-124 the chain carries Phosphoserine. A phosphothreonine mark is found at Thr-134 and Thr-137. Ser-138 carries the post-translational modification Phosphoserine.

Belongs to the globin family. In terms of assembly, heterotetramer of two alpha chains and two beta chains. In terms of tissue distribution, red blood cells.

In terms of biological role, involved in oxygen transport from the lung to the various peripheral tissues. Functionally, hemopressin acts as an antagonist peptide of the cannabinoid receptor CNR1. Hemopressin-binding efficiently blocks cannabinoid receptor CNR1 and subsequent signaling. The chain is Hemoglobin subunit alpha (HBA) from Macropus giganteus (Eastern gray kangaroo).